The primary structure comprises 215 residues: Adenylate kinase (215 aa).

10-15 serves as a coordination point for ATP; sequence GAGKGT. Residues 30 to 59 are NMP; the sequence is STGDILRANVRDGTKLGKEAKGYMDKGELV. Residues Thr31, Arg36, 57–59, 85–88, and Gln92 contribute to the AMP site; these read ELV and GYPR. The tract at residues 126 to 162 is LID; the sequence is GRYVCTCGESYHMKFNPPKKENVCDACGADLYQRDDD. Residue Arg127 coordinates ATP. Zn(2+)-binding residues include Cys130 and Cys132. An ATP-binding site is contributed by 135 to 136; it reads SY. Zn(2+)-binding residues include Cys149 and Cys152. 2 residues coordinate AMP: Arg159 and Arg170. ATP is bound at residue Gly198.

The protein belongs to the adenylate kinase family. As to quaternary structure, monomer.

It localises to the cytoplasm. It catalyses the reaction AMP + ATP = 2 ADP. It functions in the pathway purine metabolism; AMP biosynthesis via salvage pathway; AMP from ADP: step 1/1. Its function is as follows. Catalyzes the reversible transfer of the terminal phosphate group between ATP and AMP. Plays an important role in cellular energy homeostasis and in adenine nucleotide metabolism. In Methanococcoides burtonii (strain DSM 6242 / NBRC 107633 / OCM 468 / ACE-M), this protein is Adenylate kinase.